Here is a 213-residue protein sequence, read N- to C-terminus: ATP synthase peripheral stalk subunit OSCP, mitochondrial (213 aa).

A mitochondrion-targeting transit peptide spans 1–23; that stretch reads MAAPAVSGLSRQVRCFSTSVVRP. The SIFI-degron signature appears at 5–23; sequence AVSGLSRQVRCFSTSVVRP. Lysine 54, lysine 60, lysine 70, and lysine 73 each carry N6-acetyllysine. The residue at position 90 (lysine 90) is an N6-succinyllysine. An N6-acetyllysine; alternate mark is found at lysine 158 and lysine 162. 2 positions are modified to N6-succinyllysine; alternate: lysine 158 and lysine 162. N6-acetyllysine is present on residues lysine 172, lysine 176, and lysine 192. The residue at position 199 (lysine 199) is an N6-succinyllysine.

This sequence belongs to the ATPase delta chain family. As to quaternary structure, component of the ATP synthase complex composed at least of ATP5F1A/subunit alpha, ATP5F1B/subunit beta, ATP5MC1/subunit c (homooctomer), MT-ATP6/subunit a, MT-ATP8/subunit 8, ATP5ME/subunit e, ATP5MF/subunit f, ATP5MG/subunit g, ATP5MK/subunit k, ATP5MJ/subunit j, ATP5F1C/subunit gamma, ATP5F1D/subunit delta, ATP5F1E/subunit epsilon, ATP5PF/subunit F6, ATP5PB/subunit b, ATP5PD/subunit d, ATP5PO/subunit OSCP. ATP synthase complex consists of a soluble F(1) head domain (subunits alpha(3) and beta(3)) - the catalytic core - and a membrane F(0) domain - the membrane proton channel (subunits c, a, 8, e, f, g, k and j). These two domains are linked by a central stalk (subunits gamma, delta, and epsilon) rotating inside the F1 region and a stationary peripheral stalk (subunits F6, b, d, and OSCP). Post-translationally, acetylation at Lys-162 decreases ATP production. Deacetylated by SIRT3. In response to mitochondrial stress, the precursor protein is ubiquitinated by the SIFI complex in the cytoplasm before mitochondrial import, leading to its degradation. Within the SIFI complex, UBR4 initiates ubiquitin chain that are further elongated or branched by KCMF1.

The protein resides in the mitochondrion. It is found in the mitochondrion inner membrane. Its function is as follows. Subunit OSCP, of the mitochondrial membrane ATP synthase complex (F(1)F(0) ATP synthase or Complex V) that produces ATP from ADP in the presence of a proton gradient across the membrane which is generated by electron transport complexes of the respiratory chain. ATP synthase complex consist of a soluble F(1) head domain - the catalytic core - and a membrane F(1) domain - the membrane proton channel. These two domains are linked by a central stalk rotating inside the F(1) region and a stationary peripheral stalk. During catalysis, ATP synthesis in the catalytic domain of F(1) is coupled via a rotary mechanism of the central stalk subunits to proton translocation. In vivo, can only synthesize ATP although its ATP hydrolase activity can be activated artificially in vitro. Part of the complex F(0) domain. Part of the complex F(0) domain and the peripheric stalk, which acts as a stator to hold the catalytic alpha(3)beta(3) subcomplex and subunit a/ATP6 static relative to the rotary elements. This chain is ATP synthase peripheral stalk subunit OSCP, mitochondrial, found in Homo sapiens (Human).